The chain runs to 466 residues: Sulfate adenylyltransferase subunit 1 (466 aa).

One can recognise a tr-type G domain in the interval 22 to 237; sequence KELVRFLTCG…LNTIDVKTQE (216 aa). The tract at residues 31–38 is G1; it reads GSVDDGKS. GTP is bound at residue 31–38; it reads GSVDDGKS. A G2 region spans residues 89-93; the sequence is GITID. Residues 110–113 are G3; it reads DTPG. Residues 110–114 and 165–168 each bind GTP; these read DTPGH and NKMD. The tract at residues 165-168 is G4; sequence NKMD. The G5 stretch occupies residues 202 to 204; sequence SAL.

This sequence belongs to the TRAFAC class translation factor GTPase superfamily. Classic translation factor GTPase family. CysN/NodQ subfamily. As to quaternary structure, heterodimer composed of CysD, the smaller subunit, and CysN.

The enzyme catalyses sulfate + ATP + H(+) = adenosine 5'-phosphosulfate + diphosphate. The protein operates within sulfur metabolism; hydrogen sulfide biosynthesis; sulfite from sulfate: step 1/3. With CysD forms the ATP sulfurylase (ATPS) that catalyzes the adenylation of sulfate producing adenosine 5'-phosphosulfate (APS) and diphosphate, the first enzymatic step in sulfur assimilation pathway. APS synthesis involves the formation of a high-energy phosphoric-sulfuric acid anhydride bond driven by GTP hydrolysis by CysN coupled to ATP hydrolysis by CysD. This is Sulfate adenylyltransferase subunit 1 from Colwellia psychrerythraea (strain 34H / ATCC BAA-681) (Vibrio psychroerythus).